A 311-amino-acid polypeptide reads, in one-letter code: Malate dehydrogenase (311 aa).

NAD(+)-binding positions include 10-15 (GAGRVG) and aspartate 35. Residues arginine 84 and arginine 90 each coordinate substrate. Residues asparagine 97 and 120 to 122 (VTN) each bind NAD(+). Substrate contacts are provided by asparagine 122 and arginine 153. Histidine 177 serves as the catalytic Proton acceptor.

The protein belongs to the LDH/MDH superfamily. MDH type 3 family.

It catalyses the reaction (S)-malate + NAD(+) = oxaloacetate + NADH + H(+). In terms of biological role, catalyzes the reversible oxidation of malate to oxaloacetate. The protein is Malate dehydrogenase of Nitrosococcus oceani (strain ATCC 19707 / BCRC 17464 / JCM 30415 / NCIMB 11848 / C-107).